Consider the following 329-residue polypeptide: Cathepsin K (329 aa).

The first 15 residues, 1-15, serve as a signal peptide directing secretion; that stretch reads MWGLKVLLLPVVSFA. The propeptide at 16–114 is activation peptide; the sequence is LYPEEILDTH…TLYIPEWEGR (99 aa). A glycan (N-linked (GlcNAc...) asparagine) is linked at N103. Cystine bridges form between C136–C177, C170–C210, and C269–C318. C139 is an active-site residue. Catalysis depends on residues H276 and N296.

The protein belongs to the peptidase C1 family. As to expression, predominantly expressed in osteoclasts (bones). Expressed in thyroid epithelial cells.

Its subcellular location is the lysosome. It is found in the secreted. The protein localises to the apical cell membrane. The enzyme catalyses Broad proteolytic activity. With small-molecule substrates and inhibitors, the major determinant of specificity is P2, which is preferably Leu, Met &gt; Phe, and not Arg.. In terms of biological role, thiol protease involved in osteoclastic bone resorption and may participate partially in the disorder of bone remodeling. Displays potent endoprotease activity against fibrinogen at acid pH. May play an important role in extracellular matrix degradation. Involved in the release of thyroid hormone thyroxine (T4) by limited proteolysis of TG/thyroglobulin in the thyroid follicle lumen. The protein is Cathepsin K (CTSK) of Homo sapiens (Human).